Consider the following 494-residue polypeptide: Chromosomal replication initiator protein DnaA (494 aa).

A domain I, interacts with DnaA modulators region spans residues 1–103 (MTNIGGPVVE…LRVEVIVRGM (103 aa)). Residues 103-148 (MKRVSKGVVCRTSAAPVVLEGQTASSFVESYTEPSVKDIEAGVFGS) are domain II. A domain III, AAA+ region region spans residues 149–371 (PLDSRYTFES…GAFNQLLFRQ (223 aa)). Positions 195, 197, 198, and 199 each coordinate ATP. Positions 372–494 (SFESDLSLER…LKRLIGEQAA (123 aa)) are domain IV, binds dsDNA.

Belongs to the DnaA family. As to quaternary structure, oligomerizes as a right-handed, spiral filament on DNA at oriC.

It localises to the cytoplasm. In terms of biological role, plays an essential role in the initiation and regulation of chromosomal replication. ATP-DnaA binds to the origin of replication (oriC) to initiate formation of the DNA replication initiation complex once per cell cycle. Binds the DnaA box (a 9 base pair repeat at the origin) and separates the double-stranded (ds)DNA. Forms a right-handed helical filament on oriC DNA; dsDNA binds to the exterior of the filament while single-stranded (ss)DNA is stabiized in the filament's interior. The ATP-DnaA-oriC complex binds and stabilizes one strand of the AT-rich DNA unwinding element (DUE), permitting loading of DNA polymerase. After initiation quickly degrades to an ADP-DnaA complex that is not apt for DNA replication. Binds acidic phospholipids. The sequence is that of Chromosomal replication initiator protein DnaA from Bartonella quintana (strain Toulouse) (Rochalimaea quintana).